Here is a 167-residue protein sequence, read N- to C-terminus: LIM domain transcription factor LMO4.1 (167 aa).

Polar residues predominate over residues 1 to 17; the sequence is MVNNRVTESTTTAVSSN. Residues 1–20 are disordered; the sequence is MVNNRVTESTTTAVSSNGGP. LIM zinc-binding domains follow at residues 22–84 and 86–148; these read KACA…LFGS and GACS…GLLS.

Acts as a positive cofactor of GATA transcription factors to establish the identity of the ventral mesoderm during gastrulation. Down-regulation in the dorsal mesoderm is necessary for the proper formation of this territory since, when present, lmo4 may bind ldb1 and restrict the availability of this cofactor for Spemman organizer transcription factors. At neurula stages, suppresses primary neuron differentiation and modulates gene expression at the Isthmic Organizer of the midbrain-hindbrain boundary. This chain is LIM domain transcription factor LMO4.1 (lmo4.1), found in Xenopus tropicalis (Western clawed frog).